Here is a 281-residue protein sequence, read N- to C-terminus: Putative zinc-binding protein ORF11 (281 aa).

The protein is Putative zinc-binding protein ORF11 (ORF11) of Ictaluridae (bullhead catfishes).